Here is a 157-residue protein sequence, read N- to C-terminus: 6,7-dimethyl-8-ribityllumazine synthase (157 aa).

5-amino-6-(D-ribitylamino)uracil-binding positions include W27, 59–61 (AIE), and 81–83 (VVI). 86 to 87 (ET) provides a ligand contact to (2S)-2-hydroxy-3-oxobutyl phosphate. The Proton donor role is filled by H89. N114 provides a ligand contact to 5-amino-6-(D-ribitylamino)uracil. Residue R128 coordinates (2S)-2-hydroxy-3-oxobutyl phosphate.

Belongs to the DMRL synthase family. As to quaternary structure, homopentamer.

It catalyses the reaction (2S)-2-hydroxy-3-oxobutyl phosphate + 5-amino-6-(D-ribitylamino)uracil = 6,7-dimethyl-8-(1-D-ribityl)lumazine + phosphate + 2 H2O + H(+). The protein operates within cofactor biosynthesis; riboflavin biosynthesis; riboflavin from 2-hydroxy-3-oxobutyl phosphate and 5-amino-6-(D-ribitylamino)uracil: step 1/2. In terms of biological role, catalyzes the formation of 6,7-dimethyl-8-ribityllumazine by condensation of 5-amino-6-(D-ribitylamino)uracil with 3,4-dihydroxy-2-butanone 4-phosphate. This is the penultimate step in the biosynthesis of riboflavin. In Mycolicibacterium vanbaalenii (strain DSM 7251 / JCM 13017 / BCRC 16820 / KCTC 9966 / NRRL B-24157 / PYR-1) (Mycobacterium vanbaalenii), this protein is 6,7-dimethyl-8-ribityllumazine synthase.